Here is a 209-residue protein sequence, read N- to C-terminus: Protein-L-isoaspartate O-methyltransferase (209 aa).

Residue serine 55 is part of the active site.

Belongs to the methyltransferase superfamily. L-isoaspartyl/D-aspartyl protein methyltransferase family.

It is found in the cytoplasm. It catalyses the reaction [protein]-L-isoaspartate + S-adenosyl-L-methionine = [protein]-L-isoaspartate alpha-methyl ester + S-adenosyl-L-homocysteine. Catalyzes the methyl esterification of L-isoaspartyl residues in peptides and proteins that result from spontaneous decomposition of normal L-aspartyl and L-asparaginyl residues. It plays a role in the repair and/or degradation of damaged proteins. The polypeptide is Protein-L-isoaspartate O-methyltransferase (Anaeromyxobacter dehalogenans (strain 2CP-1 / ATCC BAA-258)).